A 101-amino-acid polypeptide reads, in one-letter code: CRISPR-associated endoribonuclease Cas2 (101 aa).

Residue aspartate 8 coordinates Mg(2+).

It belongs to the CRISPR-associated endoribonuclease Cas2 protein family. Homodimer, forms a heterotetramer with a Cas1 homodimer. The cofactor is Mg(2+).

Functionally, CRISPR (clustered regularly interspaced short palindromic repeat), is an adaptive immune system that provides protection against mobile genetic elements (viruses, transposable elements and conjugative plasmids). CRISPR clusters contain sequences complementary to antecedent mobile elements and target invading nucleic acids. CRISPR clusters are transcribed and processed into CRISPR RNA (crRNA). Functions as a ssRNA-specific endoribonuclease. Involved in the integration of spacer DNA into the CRISPR cassette. The chain is CRISPR-associated endoribonuclease Cas2 from Ligilactobacillus salivarius (strain UCC118) (Lactobacillus salivarius).